Here is a 611-residue protein sequence, read N- to C-terminus: Mitochondrial distribution and morphology protein 34 (611 aa).

One can recognise an SMP-LTD domain in the interval 1 to 195 (MAFNFNWSPL…LPAIIHRLSL (195 aa)). Residues 325–342 (SAPLSSQDTASVASSQSR) are compositionally biased toward polar residues. Disordered regions lie at residues 325 to 347 (SAPL…GLPS), 361 to 402 (RHSK…STIT), 415 to 544 (SIIP…PTYT), and 587 to 611 (SYVG…AYRH). Positions 361–373 (RHSKAHARKRKKR) are enriched in basic residues. Basic and acidic residues-rich tracts occupy residues 374-385 (VIDLRPHRKPTD) and 444-459 (TLRD…ERTN). Positions 520 to 529 (PLGPPAPAPI) are enriched in pro residues.

The protein belongs to the MDM34 family. In terms of assembly, component of the ER-mitochondria encounter structure (ERMES) or MDM complex, composed of MMM1, MDM10, MDM12 and MDM34.

Its subcellular location is the mitochondrion outer membrane. In terms of biological role, component of the ERMES/MDM complex, which serves as a molecular tether to connect the endoplasmic reticulum (ER) and mitochondria. Components of this complex are involved in the control of mitochondrial shape and protein biogenesis, and function in nonvesicular lipid trafficking between the ER and mitochondria. MDM34 is required for the interaction of the ER-resident membrane protein MMM1 and the outer mitochondrial membrane-resident beta-barrel protein MDM10. The sequence is that of Mitochondrial distribution and morphology protein 34 from Paracoccidioides brasiliensis (strain Pb18).